The following is a 96-amino-acid chain: Probable quinol oxidase subunit 4 (96 aa).

A run of 3 helical transmembrane segments spans residues 8–28 (TVGFIASIVLTILAVFVTLYT), 36–56 (ITIIFGFAFIQAAVQLLMFMH), and 68–88 (FKVLFAIIITLITVIGTYWVM).

The protein belongs to the cytochrome c oxidase bacterial subunit 4 family.

It localises to the cell membrane. It catalyses the reaction 2 a quinol + O2 = 2 a quinone + 2 H2O. Its function is as follows. Catalyzes quinol oxidation with the concomitant reduction of oxygen to water. This Staphylococcus saprophyticus subsp. saprophyticus (strain ATCC 15305 / DSM 20229 / NCIMB 8711 / NCTC 7292 / S-41) protein is Probable quinol oxidase subunit 4 (qoxD).